The chain runs to 389 residues: Sterol methyltransferase-like 1 (389 aa).

The chain crosses the membrane as a helical span at residues Ile25–Leu45.

It belongs to the class I-like SAM-binding methyltransferase superfamily. Erg6/SMT family.

Its subcellular location is the microsome membrane. Its function is as follows. Unable to convert squalene, botryococcene, cycloartenol, zymosterol or lanosterol to mono-, di-, tri- or tetramethylated derivatives. The sequence is that of Sterol methyltransferase-like 1 (SMT-1) from Botryococcus braunii (Green alga).